Here is a 179-residue protein sequence, read N- to C-terminus: Ribosome maturation factor RimM (179 aa).

The region spanning 95 to 174 (KDEFFYFDIL…QIFCTQDAFL (80 aa)) is the PRC barrel domain.

It belongs to the RimM family. Binds ribosomal protein uS19.

The protein resides in the cytoplasm. Its function is as follows. An accessory protein needed during the final step in the assembly of 30S ribosomal subunit, possibly for assembly of the head region. Essential for efficient processing of 16S rRNA. May be needed both before and after RbfA during the maturation of 16S rRNA. It has affinity for free ribosomal 30S subunits but not for 70S ribosomes. This is Ribosome maturation factor RimM from Campylobacter jejuni subsp. jejuni serotype O:6 (strain 81116 / NCTC 11828).